A 224-amino-acid chain; its full sequence is Ribose-5-phosphate isomerase A (224 aa).

Substrate-binding positions include 32-35, 85-88, and 98-101; these read TGST, DGAD, and KGGG. Residue glutamate 107 is the Proton acceptor of the active site. Position 125 (lysine 125) interacts with substrate.

It belongs to the ribose 5-phosphate isomerase family. In terms of assembly, homodimer.

It catalyses the reaction aldehydo-D-ribose 5-phosphate = D-ribulose 5-phosphate. The protein operates within carbohydrate degradation; pentose phosphate pathway; D-ribose 5-phosphate from D-ribulose 5-phosphate (non-oxidative stage): step 1/1. Functionally, catalyzes the reversible conversion of ribose-5-phosphate to ribulose 5-phosphate. In Pseudomonas putida (strain GB-1), this protein is Ribose-5-phosphate isomerase A.